Reading from the N-terminus, the 137-residue chain is MYTRTVRLQDTDAAGVVYFTSALDICHEAFEDSLMGAGIDIRTFFSNPDTATPIIHADIDFLKPSFCGDQLTLQLSTHQLAEDEFEVRYNITAVNKGERLIAKATIRHVCINPINRQRQPLPKELVTWIQRWSLAMS.

Residue aspartate 12 is part of the active site.

Belongs to the 4-hydroxybenzoyl-CoA thioesterase family. DHNA-CoA hydrolase subfamily.

The catalysed reaction is 1,4-dihydroxy-2-naphthoyl-CoA + H2O = 1,4-dihydroxy-2-naphthoate + CoA + H(+). The protein operates within cofactor biosynthesis; phylloquinone biosynthesis. Its pathway is quinol/quinone metabolism; 1,4-dihydroxy-2-naphthoate biosynthesis; 1,4-dihydroxy-2-naphthoate from chorismate: step 7/7. In terms of biological role, catalyzes the hydrolysis of 1,4-dihydroxy-2-naphthoyl-CoA (DHNA-CoA) to 1,4-dihydroxy-2-naphthoate (DHNA), a reaction involved in phylloquinone (vitamin K1) biosynthesis. The sequence is that of 1,4-dihydroxy-2-naphthoyl-CoA hydrolase from Acaryochloris marina (strain MBIC 11017).